The following is a 348-amino-acid chain: Dihydroorotase (348 aa).

Positions 14 and 16 each coordinate Zn(2+). Substrate is bound by residues 16 to 18 and asparagine 42; that span reads HLR. Residues lysine 100, histidine 137, and histidine 175 each coordinate Zn(2+). Position 100 is an N6-carboxylysine (lysine 100). A substrate-binding site is contributed by histidine 137. Leucine 220 provides a ligand contact to substrate. Zn(2+) is bound at residue aspartate 248. The active site involves aspartate 248. Residues histidine 252 and alanine 264 each contribute to the substrate site.

This sequence belongs to the metallo-dependent hydrolases superfamily. DHOase family. Class II DHOase subfamily. Homodimer. Zn(2+) serves as cofactor.

The catalysed reaction is (S)-dihydroorotate + H2O = N-carbamoyl-L-aspartate + H(+). The protein operates within pyrimidine metabolism; UMP biosynthesis via de novo pathway; (S)-dihydroorotate from bicarbonate: step 3/3. In terms of biological role, catalyzes the reversible cyclization of carbamoyl aspartate to dihydroorotate. This chain is Dihydroorotase, found in Pseudomonas aeruginosa (strain LESB58).